We begin with the raw amino-acid sequence, 201 residues long: Small ribosomal subunit protein uS4c (201 aa).

The region spanning 89–150 (MRLDNIVFRL…RQKSQAIITK (62 aa)) is the S4 RNA-binding domain.

The protein belongs to the universal ribosomal protein uS4 family. As to quaternary structure, part of the 30S ribosomal subunit. Contacts protein S5. The interaction surface between S4 and S5 is involved in control of translational fidelity.

Its subcellular location is the plastid. The protein localises to the chloroplast. In terms of biological role, one of the primary rRNA binding proteins, it binds directly to 16S rRNA where it nucleates assembly of the body of the 30S subunit. Functionally, with S5 and S12 plays an important role in translational accuracy. In Physcomitrium patens (Spreading-leaved earth moss), this protein is Small ribosomal subunit protein uS4c (rps4).